The primary structure comprises 114 residues: Ferredoxin (114 aa).

[3Fe-4S] cluster-binding residues include Cys-9 and Cys-17. Cys-21, Cys-40, Cys-43, and Cys-46 together coordinate [4Fe-4S] cluster. One can recognise a 4Fe-4S ferredoxin-type domain in the interval 31–60; that stretch reads RMLYINPDECVDCGACKPACRVEAIYWEGD. Cys-50 is a [3Fe-4S] cluster binding site.

It depends on [4Fe-4S] cluster as a cofactor. Requires [3Fe-4S] cluster as cofactor.

In terms of biological role, ferredoxins are iron-sulfur proteins that transfer electrons in a wide variety of metabolic reactions. This is Ferredoxin (fdxA) from Mycobacterium tuberculosis (strain ATCC 25618 / H37Rv).